A 42-amino-acid chain; its full sequence is Beta-defensin 6 (42 aa).

Gln-1 is subject to Pyrrolidone carboxylic acid. 3 cysteine pairs are disulfide-bonded: Cys-9-Cys-38, Cys-16-Cys-31, and Cys-21-Cys-39.

This sequence belongs to the beta-defensin family. In terms of tissue distribution, neutrophilic granules.

Its subcellular location is the secreted. Functionally, has bactericidal activity. Active against E.coli ML35 and S.aureus 502A. This chain is Beta-defensin 6 (DEFB6), found in Bos taurus (Bovine).